The primary structure comprises 82 residues: Large ribosomal subunit protein bL28 (82 aa).

This sequence belongs to the bacterial ribosomal protein bL28 family.

The chain is Large ribosomal subunit protein bL28 from Vesicomyosocius okutanii subsp. Calyptogena okutanii (strain HA).